The primary structure comprises 214 residues: Leucyl/phenylalanyl-tRNA--protein transferase (214 aa).

Belongs to the L/F-transferase family.

Its subcellular location is the cytoplasm. The catalysed reaction is N-terminal L-lysyl-[protein] + L-leucyl-tRNA(Leu) = N-terminal L-leucyl-L-lysyl-[protein] + tRNA(Leu) + H(+). The enzyme catalyses N-terminal L-arginyl-[protein] + L-leucyl-tRNA(Leu) = N-terminal L-leucyl-L-arginyl-[protein] + tRNA(Leu) + H(+). It carries out the reaction L-phenylalanyl-tRNA(Phe) + an N-terminal L-alpha-aminoacyl-[protein] = an N-terminal L-phenylalanyl-L-alpha-aminoacyl-[protein] + tRNA(Phe). Functions in the N-end rule pathway of protein degradation where it conjugates Leu, Phe and, less efficiently, Met from aminoacyl-tRNAs to the N-termini of proteins containing an N-terminal arginine or lysine. The polypeptide is Leucyl/phenylalanyl-tRNA--protein transferase (Cereibacter sphaeroides (strain ATCC 17023 / DSM 158 / JCM 6121 / CCUG 31486 / LMG 2827 / NBRC 12203 / NCIMB 8253 / ATH 2.4.1.) (Rhodobacter sphaeroides)).